We begin with the raw amino-acid sequence, 625 residues long: Threonine--tRNA ligase (625 aa).

Residues 1-147 (MRMLLIHSDY…TIVPEEAKVE (147 aa)) are editing domain. The segment at 206–505 (PHVRLMLEHE…MQEGKKPMFP (300 aa)) is catalytic. Zn(2+) contacts are provided by cysteine 298, histidine 350, and histidine 474.

It belongs to the class-II aminoacyl-tRNA synthetase family. As to quaternary structure, homodimer. Zn(2+) is required as a cofactor.

The protein resides in the cytoplasm. It carries out the reaction tRNA(Thr) + L-threonine + ATP = L-threonyl-tRNA(Thr) + AMP + diphosphate + H(+). Functionally, catalyzes the attachment of threonine to tRNA(Thr) in a two-step reaction: L-threonine is first activated by ATP to form Thr-AMP and then transferred to the acceptor end of tRNA(Thr). Also edits incorrectly charged L-seryl-tRNA(Thr). This is Threonine--tRNA ligase from Pyrococcus furiosus (strain ATCC 43587 / DSM 3638 / JCM 8422 / Vc1).